A 259-amino-acid polypeptide reads, in one-letter code: UPF0246 protein NGO_0461 (259 aa).

Belongs to the UPF0246 family.

The protein is UPF0246 protein NGO_0461 of Neisseria gonorrhoeae (strain ATCC 700825 / FA 1090).